A 586-amino-acid polypeptide reads, in one-letter code: CTP synthase 2 (586 aa).

The region spanning 300-554 (SIALVGKYTK…LAATGNLNAH (255 aa)) is the Glutamine amidotransferase type-1 domain. Residues Cys-399, His-526, and Glu-528 each act as for GATase activity in the active site. 3 positions are modified to phosphoserine: Ser-568, Ser-571, and Ser-574.

The protein belongs to the CTP synthase family.

The catalysed reaction is UTP + L-glutamine + ATP + H2O = CTP + L-glutamate + ADP + phosphate + 2 H(+). The protein operates within pyrimidine metabolism; CTP biosynthesis via de novo pathway; CTP from UDP: step 2/2. Catalyzes the ATP-dependent amination of UTP to CTP with either L-glutamine or ammonia as the source of nitrogen. Constitutes the rate-limiting enzyme in the synthesis of cytosine nucleotides. In Mus musculus (Mouse), this protein is CTP synthase 2 (Ctps2).